The primary structure comprises 668 residues: MSDILSRHRQLCELLIEYGHQYYVLDNPTVPDAEYDRLMRELIVLEAEHPELKTPASPSVRVGGQPLTAFKQVRHEIPMLSLDNVFSGEELQAFEQRMRDRLKREVSFTFCCEPKLDGLAVSLLYVAGQLVQAATRGDGTTGEEITENVRTIKAIPLSLRGEGWPARLEVRGEVFMPKAGFEAMNAKALAAGEKVFVNPRNAAAGSLRQLDSRITASRPLAFYAYGVGVGGEQLGGSHFGRLNQLKEWGLPLSPEVKLKEGAAGCQAFHDDILARRGELPYEIDGVVYKVDAIPLQEELGFVARAPRWATAHKFPAQEEMTELENVEFQVGRTGAVTPVAKLKPVFVGGVTVSNATLHNADEIERLGVMIGDTVIVRRAGDVIPQIVAVVEAQRPADARAILFPTECPVCGSAVERLEGEAVTRCSGGLFCEAQRKEAIKHFAARRAMDVDGLGDKIVEQLVDKGLVKTPADLFSLNAIQLAGLERMGQKSALNLVAAIDAARSTTLPRFLFALGIREVGEATALNLANHFLTLDALRAASVEQLLEVADVGDIVAKHVYYFLRQPHNIEVLEALLAAGIHWPAIEKKEASEQPFAGKTFVLTGTLTTLSRNDAKAALQALGAKVAGSVSAKTDVLVAGEAAGSKLVKAQELGITVWSEEELQQALQG.

Residues 32–36 (DAEYD), 81–82 (SL), and Glu113 each bind NAD(+). Lys115 (N6-AMP-lysine intermediate) is an active-site residue. NAD(+) contacts are provided by Arg136, Glu173, Lys289, and Lys313. Positions 407, 410, 425, and 431 each coordinate Zn(2+). In terms of domain architecture, BRCT spans 590-668 (ASEQPFAGKT…EEELQQALQG (79 aa)).

Belongs to the NAD-dependent DNA ligase family. LigA subfamily. It depends on Mg(2+) as a cofactor. Mn(2+) is required as a cofactor.

The enzyme catalyses NAD(+) + (deoxyribonucleotide)n-3'-hydroxyl + 5'-phospho-(deoxyribonucleotide)m = (deoxyribonucleotide)n+m + AMP + beta-nicotinamide D-nucleotide.. DNA ligase that catalyzes the formation of phosphodiester linkages between 5'-phosphoryl and 3'-hydroxyl groups in double-stranded DNA using NAD as a coenzyme and as the energy source for the reaction. It is essential for DNA replication and repair of damaged DNA. This is DNA ligase from Aeromonas hydrophila subsp. hydrophila (strain ATCC 7966 / DSM 30187 / BCRC 13018 / CCUG 14551 / JCM 1027 / KCTC 2358 / NCIMB 9240 / NCTC 8049).